The chain runs to 753 residues: Synaptotagmin-like protein 5 (753 aa).

In terms of domain architecture, RabBD spans Phe7–Glu123. The FYVE-type zinc finger occupies Cys64 to Cys106. 3 disordered regions span residues Arg145–Leu188, Ser221–Asn283, and Thr298–Leu359. Position 147 is a phosphoserine (Ser147). Positions Ser224–Leu238 are enriched in low complexity. Composition is skewed to polar residues over residues Thr260–Ser275 and Thr305–Thr316. 2 consecutive C2 domains span residues Val429–Phe550 and Pro590–Met717.

As to quaternary structure, binds RAB27A that has been activated by GTP-binding.

It localises to the membrane. May act as Rab effector protein and play a role in vesicle trafficking. Binds phospholipids. In Rattus norvegicus (Rat), this protein is Synaptotagmin-like protein 5 (Sytl5).